Here is a 475-residue protein sequence, read N- to C-terminus: Enolase (475 aa).

A (2R)-2-phosphoglycerate-binding site is contributed by glutamine 179. Catalysis depends on glutamate 221, which acts as the Proton donor. 3 residues coordinate Mg(2+): aspartate 258, glutamate 312, and aspartate 339. 4 residues coordinate (2R)-2-phosphoglycerate: lysine 364, arginine 393, serine 394, and lysine 415. Lysine 364 acts as the Proton acceptor in catalysis. A disordered region spans residues 454–475 (STPAATPKKSPAKKTTKAKSKK). Positions 463–475 (SPAKKTTKAKSKK) are enriched in basic residues.

It belongs to the enolase family. The cofactor is Mg(2+).

It is found in the cell membrane. The protein resides in the cytoplasm. The protein localises to the secreted. It localises to the cell surface. The catalysed reaction is (2R)-2-phosphoglycerate = phosphoenolpyruvate + H2O. It participates in carbohydrate degradation; glycolysis; pyruvate from D-glyceraldehyde 3-phosphate: step 4/5. In terms of biological role, catalyzes the reversible conversion of 2-phosphoglycerate (2-PG) into phosphoenolpyruvate (PEP). It is essential for the degradation of carbohydrates via glycolysis. Its function is as follows. 'Moonlights' as a plasminogen receptor. Binds host (chicken) plasminogen; enolase antiserum inhibits M.gallisepticum adherence to chicken embryo fibroblasts. This Mycoplasmoides gallisepticum (strain R(low / passage 15 / clone 2)) (Mycoplasma gallisepticum) protein is Enolase.